The chain runs to 274 residues: SWI/SNF chromatin-remodeling complex subunit snf30 (274 aa).

Composition is skewed to polar residues over residues 123–150 (TLSYPPSNGDSSSYANGTDLHGNTGTMQ) and 157–167 (PSLTRSDSVSS). Residues 123–167 (TLSYPPSNGDSSSYANGTDLHGNTGTMQQEEKANPSLTRSDSVSS) are disordered.

Component of the SWI/SNF global transcription activator complex composed of at least arp9, arp42, snf5, snf22, snf30, sbf59, sol1, ssr1, ssr2, ssr3, ssr4 and tfg3.

Its subcellular location is the cytoplasm. The protein localises to the nucleus. Its function is as follows. Component of the SWI/SNF complex, an ATP-dependent chromatin remodeling complex, required for the positive and negative regulation of gene expression of a large number of genes. It changes chromatin structure by altering DNA-histone contacts within a nucleosome, leading eventually to a change in nucleosome position, thus facilitating or repressing binding of gene-specific transcription factors. This Schizosaccharomyces pombe (strain 972 / ATCC 24843) (Fission yeast) protein is SWI/SNF chromatin-remodeling complex subunit snf30 (snf30).